The primary structure comprises 444 residues: tRNA pseudouridine synthase Pus10 (444 aa).

D265 (nucleophile) is an active-site residue. Residues Y333 and Y405 each contribute to the substrate site.

This sequence belongs to the pseudouridine synthase Pus10 family.

The enzyme catalyses uridine(54) in tRNA = pseudouridine(54) in tRNA. It carries out the reaction uridine(55) in tRNA = pseudouridine(55) in tRNA. In terms of biological role, responsible for synthesis of pseudouridine from uracil-54 and uracil-55 in the psi GC loop of transfer RNAs. The protein is tRNA pseudouridine synthase Pus10 of Thermofilum pendens (strain DSM 2475 / Hrk 5).